The chain runs to 246 residues: Major prion protein (246 aa).

The N-terminal stretch at 1 to 15 (MLVVFVATWSDLGLC) is a signal peptide. Residues 16 to 223 (KKRPKPGGWN…ESQAYYQRGS (208 aa)) are interaction with GRB2, ERI3 and SYN1. The segment at 18–100 (RPKPGGWNTG…QWHKPSKPKT (83 aa)) is disordered. 5 tandem repeats follow at residues 44–52 (PQGGGGWGQ), 53–60 (PHGGGWGQ), 61–68 (PHGGGWGQ), 69–76 (PHGGGWGQ), and 77–84 (PHGGGWGQ). Positions 44 to 84 (PQGGGGWGQPHGGGWGQPHGGGWGQPHGGGWGQPHGGGWGQ) are 5 X 8 AA tandem repeats of P-H-G-G-G-W-G-Q. A compositionally biased stretch (gly residues) spans 45–88 (QGGGGWGQPHGGGWGQPHGGGWGQPHGGGWGQPHGGGWGQGGGT). 12 residues coordinate Cu(2+): H54, G55, G56, H62, G63, G64, H70, G71, G72, H78, G79, and G80. The span at 91–100 (QWHKPSKPKT) shows a compositional bias: basic residues. C172 and C207 are disulfide-bonded. Residues N174 and N190 are each glycosylated (N-linked (GlcNAc...) asparagine). The GPI-anchor amidated serine moiety is linked to residue S223. Positions 224-246 (SMVLFSSPPVILLISFLIFLIVG) are cleaved as a propeptide — removed in mature form.

Belongs to the prion family. As to quaternary structure, monomer and homodimer. Has a tendency to aggregate into amyloid fibrils containing a cross-beta spine, formed by a steric zipper of superposed beta-strands. Soluble oligomers may represent an intermediate stage on the path to fibril formation. Copper binding may promote oligomerization. Interacts with GRB2, APP, ERI3/PRNPIP and SYN1. Mislocalized cytosolically exposed PrP interacts with MGRN1; this interaction alters MGRN1 subcellular location and causes lysosomal enlargement. Interacts with KIAA1191.

It localises to the cell membrane. It is found in the golgi apparatus. Functionally, its primary physiological function is unclear. Has cytoprotective activity against internal or environmental stresses. May play a role in neuronal development and synaptic plasticity. May be required for neuronal myelin sheath maintenance. May play a role in iron uptake and iron homeostasis. Soluble oligomers are toxic to cultured neuroblastoma cells and induce apoptosis (in vitro). Association with GPC1 (via its heparan sulfate chains) targets PRNP to lipid rafts. Also provides Cu(2+) or Zn(2+) for the ascorbate-mediated GPC1 deaminase degradation of its heparan sulfate side chains. The chain is Major prion protein (PRNP) from Erythrocebus patas (Red guenon).